The primary structure comprises 474 residues: Mitogen-activated protein kinase pmk-3 (474 aa).

The segment covering 1–13 (MASVPSSSSLPVS) has biased composition (low complexity). The disordered stretch occupies residues 1 to 90 (MASVPSSSSL…EEEEDILSKP (90 aa)). The segment covering 30–48 (KRSNNQSQPPESYEPNTWL) has biased composition (polar residues). Residues 52–69 (REQEQQKKLAAENIKKQS) are compositionally biased toward basic and acidic residues. The 306-residue stretch at 114–419 (YDVEPNSIEY…VEEAIQHPYL (306 aa)) folds into the Protein kinase domain. ATP is bound by residues 124–132 (LGGGSFGNV) and Lys150. Asp252 acts as the Proton acceptor in catalysis. Phosphothreonine is present on Thr285. The short motif at 285–287 (TQY) is the TXY element. Residue Tyr287 is modified to Phosphotyrosine.

Belongs to the protein kinase superfamily. CMGC Ser/Thr protein kinase family. MAP kinase subfamily. Interacts with mak-2. May interact with vhp-1. May interact with uev-3. Mg(2+) serves as cofactor. Dually phosphorylated on Thr-285 and Tyr-287, which activates the enzyme. Expressed throughout the intestine.

Its subcellular location is the nucleus. The protein resides in the cytoplasm. It localises to the cell projection. The protein localises to the axon. It is found in the dendrite. Its subcellular location is the cilium. It carries out the reaction L-seryl-[protein] + ATP = O-phospho-L-seryl-[protein] + ADP + H(+). It catalyses the reaction L-threonyl-[protein] + ATP = O-phospho-L-threonyl-[protein] + ADP + H(+). Its activity is regulated as follows. Activated by phosphorylation on threonine and tyrosine. Responds to activation by environmental stress and pro-inflammatory cytokines by phosphorylating downstream targets. Involved in axon regeneration after injury, probably downstream of dlk-1 and mkk-4 and upstream of mak-2. May phosphorylate mak-2. Plays a role in cilium length regulation, possibly by reducing rab-5 mediated endocytosis. Plays a role in the formation of muscle connections, also called muscle arm extensions, between the body wall and the motor axons in the dorsal and ventral cord. The sequence is that of Mitogen-activated protein kinase pmk-3 (pmk-3) from Caenorhabditis elegans.